A 159-amino-acid polypeptide reads, in one-letter code: Transcription elongation factor GreA (159 aa).

The stretch at 7–72 (MTVRGAEKLR…IQEIESKLSN (66 aa)) forms a coiled coil.

It belongs to the GreA/GreB family.

Necessary for efficient RNA polymerase transcription elongation past template-encoded arresting sites. The arresting sites in DNA have the property of trapping a certain fraction of elongating RNA polymerases that pass through, resulting in locked ternary complexes. Cleavage of the nascent transcript by cleavage factors such as GreA or GreB allows the resumption of elongation from the new 3'terminus. GreA releases sequences of 2 to 3 nucleotides. In Buchnera aphidicola subsp. Schizaphis graminum (strain Sg), this protein is Transcription elongation factor GreA.